A 226-amino-acid chain; its full sequence is Protein GrpE (226 aa).

2 disordered regions span residues 1-24 and 205-226; these read MADE…PRDR and GVSK…EDNA. Residues 217–226 show a composition bias toward polar residues; sequence NGASTSEDNA.

It belongs to the GrpE family. As to quaternary structure, homodimer.

The protein resides in the cytoplasm. In terms of biological role, participates actively in the response to hyperosmotic and heat shock by preventing the aggregation of stress-denatured proteins, in association with DnaK and GrpE. It is the nucleotide exchange factor for DnaK and may function as a thermosensor. Unfolded proteins bind initially to DnaJ; upon interaction with the DnaJ-bound protein, DnaK hydrolyzes its bound ATP, resulting in the formation of a stable complex. GrpE releases ADP from DnaK; ATP binding to DnaK triggers the release of the substrate protein, thus completing the reaction cycle. Several rounds of ATP-dependent interactions between DnaJ, DnaK and GrpE are required for fully efficient folding. This is Protein GrpE from Brucella melitensis biotype 1 (strain ATCC 23456 / CCUG 17765 / NCTC 10094 / 16M).